Here is a 750-residue protein sequence, read N- to C-terminus: MIIRSPEPEVKILVDRDPVKTSFEEWARPGHFSRTIAKGPDTTTWIWNLHADAHDFDSHTNDLEEISRKVFSAHFGQLSIIFLWLSGMYFHGARFSNYEAWLSDPTHIGPSAQVVWPIVGQEILNGDVGGGFRGIQITSGFFQIWRASGITSELQLYCTAIGALVFAALMLFAGWFHYHKAAPKLAWFQDVESMLNHHLAGLLGLGSLSWAGHQVHVSLPINQFLNAGVDPKEIPLPHEFILNRDLLAQLYPSFAEGATPFFTLNWSKYAEFLTFRGGLDPVTGGLWLTDIAHHHLAIAILFLIAGHMYKTNWGIGHDLKDILEAHKGPFTGEGHKGLYEILTTSWHAQLALNLAMLGSLTIVVAHHMYSMPPYPYLATDYGTQLSLFTHHMWIGGFLIVGAAAHAAIFMVRDYDPTTRYNDLLDRVLRHRDAIISHLNWVCIFLGFHSFGLYIHNDTMSALGRPQDMFSDTAIQLQPIFAQWIQNTHALAPSATAPGATAGTSLTWGGGDLVAVGGKVALLPIPLGTADFLVHHIHAFTIHVTVLILLKGVLFARSSRLIPDKANLGFRFPCDGPGRGGTCQVSAWDHVFLGLFWMYNAISVVIFHFSWKMQSDVWGSISDQGVVTHITGGNFAQSSITINGWLRDFLWAQSSQVIQSYGSSLSAYGLFFLGAHFVWAFSLMFLFSGRGYWQELIESIVWAHNKLKVAPATQPRALSIIQGRAVGVTHYLLGGIATTWAFFLARIISVG.

The next 8 helical transmembrane spans lie at 70–93 (VFSA…FHGA), 156–179 (LYCT…FHYH), 195–219 (LNHH…HVSL), 291–309 (IAHH…GHMY), 346–369 (WHAQ…HHMY), 385–411 (LSLF…IFMV), 433–455 (AIIS…LYIH), and 531–549 (FLVH…LILL). [4Fe-4S] cluster-binding residues include C573 and C582. 2 consecutive transmembrane segments (helical) span residues 589 to 610 (HVFL…HFSW) and 664 to 686 (LSAY…MFLF). Residue H675 participates in chlorophyll a' binding. Chlorophyll a contacts are provided by M683 and Y691. W692 serves as a coordination point for phylloquinone. A helical membrane pass occupies residues 724–744 (AVGVTHYLLGGIATTWAFFLA).

Belongs to the PsaA/PsaB family. As to quaternary structure, the PsaA/B heterodimer binds the P700 chlorophyll special pair and subsequent electron acceptors. PSI consists of a core antenna complex that captures photons, and an electron transfer chain that converts photonic excitation into a charge separation. The eukaryotic PSI reaction center is composed of at least 11 subunits. Requires P700 is a chlorophyll a/chlorophyll a' dimer, A0 is one or more chlorophyll a, A1 is one or both phylloquinones and FX is a shared 4Fe-4S iron-sulfur center. as cofactor.

It localises to the plastid. The protein localises to the chloroplast thylakoid membrane. It catalyses the reaction reduced [plastocyanin] + hnu + oxidized [2Fe-2S]-[ferredoxin] = oxidized [plastocyanin] + reduced [2Fe-2S]-[ferredoxin]. PsaA and PsaB bind P700, the primary electron donor of photosystem I (PSI), as well as the electron acceptors A0, A1 and FX. PSI is a plastocyanin-ferredoxin oxidoreductase, converting photonic excitation into a charge separation, which transfers an electron from the donor P700 chlorophyll pair to the spectroscopically characterized acceptors A0, A1, FX, FA and FB in turn. Oxidized P700 is reduced on the lumenal side of the thylakoid membrane by plastocyanin. The sequence is that of Photosystem I P700 chlorophyll a apoprotein A1 from Nymphaea alba (White water-lily).